Here is a 235-residue protein sequence, read N- to C-terminus: Elongation factor Tu, chloroplastic (235 aa).

In terms of domain architecture, tr-type G spans 1–125; the sequence is KNMITGAAQM…EVDNYIPLPT (125 aa). Residue 47 to 50 participates in GTP binding; that stretch reads NKAD.

It belongs to the TRAFAC class translation factor GTPase superfamily. Classic translation factor GTPase family. EF-Tu/EF-1A subfamily.

It localises to the plastid. The protein resides in the chloroplast. It carries out the reaction GTP + H2O = GDP + phosphate + H(+). Its function is as follows. GTP hydrolase that promotes the GTP-dependent binding of aminoacyl-tRNA to the A-site of ribosomes during protein biosynthesis. The chain is Elongation factor Tu, chloroplastic (tufA) from Bryopsis plumosa (Green alga).